Here is a 381-residue protein sequence, read N- to C-terminus: L-lactate dehydrogenase A-like 6B (381 aa).

NAD(+) contacts are provided by residues aspartate 101–lysine 106 and arginine 148. Arginine 155, asparagine 187, and arginine 218 together coordinate substrate. Asparagine 187 provides a ligand contact to NAD(+). Histidine 242 (proton acceptor) is an active-site residue. Threonine 297 serves as a coordination point for substrate.

This sequence belongs to the LDH/MDH superfamily. LDH family. As to expression, testis specific.

The catalysed reaction is (S)-lactate + NAD(+) = pyruvate + NADH + H(+). Its pathway is fermentation; pyruvate fermentation to lactate; (S)-lactate from pyruvate: step 1/1. The protein is L-lactate dehydrogenase A-like 6B (LDHAL6B) of Homo sapiens (Human).